The sequence spans 414 residues: Putative F-box/kelch-repeat protein At2g29800 (414 aa).

The disordered stretch occupies residues 1–61 (MASISETSDD…EVENVPPIPR (61 aa)). A compositionally biased stretch (basic and acidic residues) spans 20 to 35 (KPEEPHKNPQEEKENQ). Residues 40–54 (NEADEEDDHQDEEVE) show a composition bias toward acidic residues. The F-box domain occupies 58-105 (PIPRKIPPVLIENTIAPLRRCHYPKLSLLSNAFRQVISSEDLFQVRSL). Kelch repeat units lie at residues 163–211 (KIYV…VIDG), 212–258 (RIYV…IVHV), 263–302 (KIYI…SCVV), and 305–349 (LLYA…SKMA).

The protein is Putative F-box/kelch-repeat protein At2g29800 of Arabidopsis thaliana (Mouse-ear cress).